The primary structure comprises 324 residues: Glyoxylate/hydroxypyruvate reductase B (324 aa).

Residues arginine 237 and glutamate 266 contribute to the active site. The active-site Proton donor is histidine 285.

This sequence belongs to the D-isomer specific 2-hydroxyacid dehydrogenase family. GhrB subfamily. Homodimer.

Its subcellular location is the cytoplasm. It carries out the reaction glycolate + NADP(+) = glyoxylate + NADPH + H(+). It catalyses the reaction (R)-glycerate + NAD(+) = 3-hydroxypyruvate + NADH + H(+). The catalysed reaction is (R)-glycerate + NADP(+) = 3-hydroxypyruvate + NADPH + H(+). Functionally, catalyzes the NADPH-dependent reduction of glyoxylate and hydroxypyruvate into glycolate and glycerate, respectively. In Escherichia coli O9:H4 (strain HS), this protein is Glyoxylate/hydroxypyruvate reductase B.